The following is a 2155-amino-acid chain: Alpha-tectorin (2155 aa).

Positions 1 to 22 (MNYSSFLRIWVSFIFALVQHQA) are cleaved as a signal peptide. Residues Asn-34, Asn-187, Asn-215, Asn-278, Asn-455, Asn-506, Asn-528, and Asn-560 are each glycosylated (N-linked (GlcNAc...) asparagine). The 155-residue stretch at 98-252 (PFWADVHNGI…GRWAFKVDGK (155 aa)) folds into the NIDO domain. Residues 260–314 (CTSRGQFLRRGEVFWDDLNCTVKCRCLDFNNEIYCQEASCSPYEVCEPKGKFFYC) form the VWFC domain. One can recognise a VWFD 1 domain in the interval 320 to 500 (STCVVFGEPH…RVYHADWKCD (181 aa)). Intrachain disulfides connect Cys-322/Cys-461 and Cys-344/Cys-499. Residues 597–650 (CPSFSHYSVCTSSCPDTCSDLTASRNCATPCTEGCECNQGFVLSTSQCVPLHKC) enclose the TIL 1 domain. N-linked (GlcNAc...) asparagine glycans are attached at residues Asn-670, Asn-687, Asn-813, Asn-843, Asn-855, Asn-898, Asn-920, Asn-931, and Asn-949. Positions 711 to 886 (TVCLLSQNQV…SWTTFEEICN (176 aa)) constitute a VWFD 2 domain. Cys-713 and Cys-849 are disulfide-bonded. The 53-residue stretch at 984 to 1036 (CPENSHFEECITCTETCETLTLGPICVDSCSEGCQCDEGYALLGSQCVTRSEC) folds into the TIL 2 domain. N-linked (GlcNAc...) asparagine glycans are attached at residues Asn-1048, Asn-1235, and Asn-1364. The 181-residue stretch at 1098-1278 (ASCIVSGYGH…SWVKRDTFCQ (181 aa)) folds into the VWFD 3 domain. Disulfide bonds link Cys-1100/Cys-1241 and Cys-1122/Cys-1277. The region spanning 1372 to 1425 (CPPNSHYESCVSVCQPRCAAIRLKSDCSHYCVEGCHCDAGYVLNGKSCILPHSC) is the TIL 3 domain. The VWFD 4 domain occupies 1485–1666 (SYCLAAGGGV…QKRPLAPSCN (182 aa)). 7 disulfides stabilise this stretch: Cys-1487–Cys-1622, Cys-1509–Cys-1665, Cys-1717–Cys-1775, Cys-1741–Cys-1784, Cys-1786–Cys-1818, Cys-1806–Cys-1898, and Cys-1837–Cys-1857. N-linked (GlcNAc...) asparagine glycosylation is found at Asn-1538, Asn-1565, Asn-1756, Asn-1772, Asn-1794, Asn-1851, Asn-1864, Asn-1880, Asn-1920, and Asn-1939. Positions 1805-2059 (TCKAAQMEVS…YSCKITCPHN (255 aa)) constitute a ZP domain. 3 disulfides stabilise this stretch: Cys-1980/Cys-2040, Cys-2001/Cys-2056, and Cys-2045/Cys-2052. A lipid anchor (GPI-anchor amidated asparagine) is attached at Asn-2091. Positions 2092 to 2155 (GGCEQICTSR…HFVYKSGTTS (64 aa)) are cleaved as a propeptide — removed in mature form.

As to quaternary structure, may form homomeric filament after self-association or heteromeric filament after association with beta-tectorin. Interacts with CEACAM16. Post-translationally, the presence of a hydrophobic C-terminus preceded by a potential cleavage site strongly suggests that tectorins are synthesized as glycosylphosphatidylinositol-linked, membrane-bound precursors. Tectorins are targeted to the apical surface of the inner ear epithelia by the lipid and proteolytically released into the extracellular compartment.

Its subcellular location is the cell membrane. It localises to the secreted. It is found in the extracellular space. The protein resides in the extracellular matrix. Functionally, one of the major non-collagenous components of the tectorial membrane. The tectorial membrane is an extracellular matrix of the inner ear that covers the neuroepithelium of the cochlea and contacts the stereocilia bundles of specialized sensory hair cells. Sound induces movement of these hair cells relative to the tectorial membrane, deflects the stereocilia and leads to fluctuations in hair-cell membrane potential, transducing sound into electrical signals. The sequence is that of Alpha-tectorin (TECTA) from Homo sapiens (Human).